The chain runs to 664 residues: Cyclic nucleotide-gated channel alpha-2 (664 aa).

Residues 1–11 (MTEKTNGVKSS) are compositionally biased toward polar residues. The tract at residues 1-49 (MTEKTNGVKSSPANNHNHHAPPAIKANGKDDHRTSSRPHSAADDDTSSE) is disordered. The Cytoplasmic segment spans residues 1 to 144 (MTEKTNGVKS…PAGDWYYCWL (144 aa)). Residues 12–23 (PANNHNHHAPPA) show a composition bias toward low complexity. A helical transmembrane segment spans residues 145-166 (FVIAMPVLYNWCLLVARACFSD). Over 167-176 (LQKGYYLVWL) the chain is Extracellular. A helical membrane pass occupies residues 177-197 (VLDYVSDVVYIADLFIRLRTG). The Cytoplasmic segment spans residues 198 to 222 (FLEQGLLVKDTKKLRDNYIHTLQFK). A helical membrane pass occupies residues 223 to 241 (LDVASIIPTDLIYFAVDIH). At 242-246 (SPEVR) the chain is on the extracellular side. Residues 247–265 (FNRLLHFARMFEFFDRTET) traverse the membrane as a helical segment. Residues 266–272 (RTNYPNI) lie on the Cytoplasmic side of the membrane. The ion conduction pathway stretch occupies residues 270–378 (PNIFRISNLV…GNVGSMISNM (109 aa)). A helical transmembrane segment spans residues 273-296 (FRISNLVLYILVIIHWNACIYYAI). Residues 297–319 (SKSIGFGVDTWVYPNITDPEYGY) lie on the Extracellular side of the membrane. A run of 2 helical transmembrane segments spans residues 320–354 (LAREYIYCLYWSTLTLTTIGETPPPVKDEEYLFVI) and 355–379 (FDFLIGVLIFATIVGNVGSMISNMN). A selectivity filter region spans residues 337–340 (TIGE). Residues 380-456 (ATRAEFQAKI…STLKKVRIFH (77 aa)) form a C-linker region. The Cytoplasmic portion of the chain corresponds to 380–664 (ATRAEFQAKI…SPELAAADEP (285 aa)). Positions 460 to 580 (AGLLVELVLK…EERGREILMK (121 aa)) are cyclic nucleotide-binding domain. Glycine 520, serine 523, arginine 536, and threonine 537 together coordinate 3',5'-cyclic GMP. Positions 536 and 537 each coordinate 3',5'-cyclic AMP. The stretch at 597-651 (VQEKLGQLETNMETLYTRFGRLLAEYTGAQQKLKQRITVLETKMKQNNEDDYLSD) forms a coiled coil. The segment at 641-664 (KQNNEDDYLSDGMNSPELAAADEP) is disordered.

The protein belongs to the cyclic nucleotide-gated cation channel (TC 1.A.1.5) family. CNGA2 subfamily. The olfactory cyclic nucleotide-gated channel is an heterotetramer composed of CNGA2, CNGA4 and CNGB1b subunits with 2:1:1 stoichiometry.

The protein localises to the cell projection. Its subcellular location is the cilium membrane. The enzyme catalyses Ca(2+)(in) = Ca(2+)(out). The catalysed reaction is Na(+)(in) = Na(+)(out). It carries out the reaction K(+)(in) = K(+)(out). It catalyses the reaction NH4(+)(in) = NH4(+)(out). The enzyme catalyses Rb(+)(in) = Rb(+)(out). The catalysed reaction is Li(+)(in) = Li(+)(out). It carries out the reaction Cs(+)(in) = Cs(+)(out). In terms of biological role, pore-forming subunit of the olfactory cyclic nucleotide-gated channel. Operates in the cilia of olfactory sensory neurons where chemical stimulation of the odorant is converted to an electrical signal. Mediates odorant-induced cAMP-dependent Ca(2+) influx triggering neuron depolarization. The rise of intracellular Ca(2+) levels potentiates the olfactory response by activating Ca(2+)-dependent Cl(-) channels, but it also serves as a negative feedback signal to desensitize the channel for rapid adaptation to odorants. Conducts cAMP- and cGMP-gated ion currents, with permeability for monovalent and divalent cations. The chain is Cyclic nucleotide-gated channel alpha-2 from Homo sapiens (Human).